The following is a 255-amino-acid chain: Trans-aconitate 2-methyltransferase (255 aa).

This sequence belongs to the methyltransferase superfamily. Tam family.

The protein localises to the cytoplasm. It carries out the reaction trans-aconitate + S-adenosyl-L-methionine = (E)-3-(methoxycarbonyl)pent-2-enedioate + S-adenosyl-L-homocysteine. Functionally, catalyzes the S-adenosylmethionine monomethyl esterification of trans-aconitate. The polypeptide is Trans-aconitate 2-methyltransferase (Mycolicibacterium gilvum (strain PYR-GCK) (Mycobacterium gilvum (strain PYR-GCK))).